The primary structure comprises 186 residues: Serine hydrolase RBBP9 (186 aa).

Residues 63–67 (LHCDE) are involved in binding to RB1. Active-site charge relay system residues include S75, D138, and H165.

The protein belongs to the RBBP9 family. As to quaternary structure, interacts with RB1; the interaction disrupts RB1 binding to E2F1. Interacts with RBL1 and RBL2. In terms of tissue distribution, highly expressed in the spleen, testis and kidney. Also found in the heart, liver, lung and brain.

It catalyses the reaction valacyclovir + H2O = acyclovir + L-valine + H(+). In terms of biological role, serine hydrolase. Catalyzes the hydrolytic activation of amino acid ester of the antiviral prodrug valacyclovir to its corresponding active drug, acyclovir. May negatively regulate basal or autocrine TGF-beta signaling by suppressing SMAD2-SMAD3 phosphorylation. May play a role in the transformation process due to its capacity to confer resistance to the growth-inhibitory effects of TGF-beta through interaction with RB1 and the subsequent displacement of E2F1. This chain is Serine hydrolase RBBP9, found in Rattus norvegicus (Rat).